Consider the following 250-residue polypeptide: Putative ankyrin repeat protein RBE_0623 (250 aa).

3 ANK repeats span residues 70-99 (IGDS…EPNT), 104-134 (NCYT…NINE), and 137-166 (GKET…PDKF).

The protein is Putative ankyrin repeat protein RBE_0623 of Rickettsia bellii (strain RML369-C).